We begin with the raw amino-acid sequence, 716 residues long: MNFRQEKFVRFQDWKSDKTSSDVEYSGKNEIQTGIFQRTISSISDKFYRSFESSSARIKLFKRSYKSYSFKEAVSKGIGSTHKILDPQGPFLQRWNKIFVLACIIAVSLDPLFFYVPIIDDAKKCLGIDKKMEITASVLRSFTDVFYVLHIIFQFRTGFIAPSSRVFGRGVLVEDKREIAKRYLSSHFIIDILAVLPLPQMVILIIIPHMRGSSSLNTKNMLKFIVFFQYIPRFIRIYPLYKEVTRTSGILTETAWAGAAFNLFLYMLASHVFGAFWYLFSIERETVCWKQACERNNPPCISKLLYCDPETAGGNAFLNESCPIQTPNTTLFDFGIFLDALQSGVVESQDFPQKFFYCFWWGLQNLSSLGQNLKTSTYIWEICFAVFISIAGLVLFSFLIGNMQTYLQSTTTRLEEMRVKRRDAEQWMSHRLLPENLRKRIRRYEQYKWQETRGVDEENLLSNLPKDLRRDIKRHLCLALLMRVPMFEKMDEQLLDALCDRLQPVLYTEESYIVREGDPVDEMLFIMRGKLLTITTNGGRTGFLNSEYLGAGDFCGEELLTWALDPHSSSNLPISTRTVRALMEVEAFALKADDLKFVASQFRRLHSKQLRHTFRYYSQQWKTWAACFIQAAWRRYIKKKLEESLKEEENRLQDALAKEACGSSPSLGATIYASRFAANILRTIRRSGSVRKPRMPERMPPMLLQKPAEPDFNSDD.

Residues 1 to 97 lie on the Cytoplasmic side of the membrane; that stretch reads MNFRQEKFVR…QGPFLQRWNK (97 aa). A helical membrane pass occupies residues 98 to 118; that stretch reads IFVLACIIAVSLDPLFFYVPI. Residues 119 to 132 are Extracellular-facing; it reads IDDAKKCLGIDKKM. The helical transmembrane segment at 133–153 threads the bilayer; sequence EITASVLRSFTDVFYVLHIIF. Residues 154 to 187 are Cytoplasmic-facing; it reads QFRTGFIAPSSRVFGRGVLVEDKREIAKRYLSSH. A helical membrane pass occupies residues 188-208; sequence FIIDILAVLPLPQMVILIIIP. Topologically, residues 209–220 are extracellular; it reads HMRGSSSLNTKN. The helical transmembrane segment at 221–241 threads the bilayer; sequence MLKFIVFFQYIPRFIRIYPLY. At 242–259 the chain is on the cytoplasmic side; sequence KEVTRTSGILTETAWAGA. A helical transmembrane segment spans residues 260–280; the sequence is AFNLFLYMLASHVFGAFWYLF. Topologically, residues 281-379 are extracellular; it reads SIERETVCWK…GQNLKTSTYI (99 aa). The helical transmembrane segment at 380-400 threads the bilayer; sequence WEICFAVFISIAGLVLFSFLI. The Cytoplasmic portion of the chain corresponds to 401-716; that stretch reads GNMQTYLQST…PAEPDFNSDD (316 aa). Residues 486–610 and glutamate 557 contribute to the a nucleoside 3',5'-cyclic phosphate site; that span reads MFEK…SKQL. Residues 602–617 are calmodulin-binding; sequence FRRLHSKQLRHTFRYY. Residues 622-651 form the IQ domain; it reads KTWAACFIQAAWRRYIKKKLEESLKEEENR. The disordered stretch occupies residues 689–716; it reads SVRKPRMPERMPPMLLQKPAEPDFNSDD.

Belongs to the cyclic nucleotide-gated cation channel (TC 1.A.1.5) family. As to quaternary structure, homotetramer or heterotetramer (Potential). Binds calmodulin-2/3/5 with a higher affinity than calmodulin-1/4. As to expression, expressed in the whole plant but only weakly in roots.

The protein localises to the cell membrane. Acts as a cyclic nucleotide-gated ion channel. Can be activated by cyclic AMP which leads to an opening of the cation channel. May be responsible for cAMP-induced calcium entry in cells and thus should be involved in the calcium signal transduction. Could transport K(+), Na(+) and Pb(2+). In Arabidopsis thaliana (Mouse-ear cress), this protein is Cyclic nucleotide-gated ion channel 1 (CNGC1).